The following is a 961-amino-acid chain: MRELDPDESNLLLDEQLSIRDVIEQGPFSNVYRILHGPSNRKFLLRSINLNLFRQHTGLGFEEIDEEIRICQNLQHPYICRLEKTINSVHYRHIIFENMEGNDICFEIVQRASNGFVFSEYVVSHYTRQLLDALDYCHTRKIVHRDVRPHNLVLASKDTSAPLKLCGFGVAKDLSEIGGSMACGRVGVPQFMAPEIVRKDRVSCSSDIWSSGVVLFLLLAGRLPFSGSTSDIYERIMQTDVDVDGYMPNISESARNLVRRMLNADPSKRISAKEALNHEWIRDKEHMASRKHMNDVIDQMRRYNESRKLKSNVLSAVNSGRFDETTPRQDTPQTAFVDGSSPGGDCCHRGESSSNDAAEPPADKDLSGAYKVLGSLDAINSLLDPNSYKPGSTTFQKIHDDGSVRNLLRLYDKIKALPCEPVVTEVDTSTLRKETLNQIDGLLGPSPEALELRQLLNSPHLASCVQALDVVVCEIRDPKNEASGSGDKEGNCVSSDPAPAYLNGGVLPLGAQRAGTSFEHFNQSAVHTSYDEEEEELYDCMSRLRLVQFQKDTQEPMGITLKVNEDGRCFVARIMHGGMIHRQATLHVGDEIREINGMSVANRSVESLQEMLRDARGQVTFKIIPSYRSAPPACEIFVRAQFDYEPSQDDLIPCPQAGIPFKTGDILQVISKDDHNWWQARFVSSFPSIGNSSNAQRSNQQQVAGLIPSPELQEWRTACLAMERSKNTCNTHCMWFNKKKKYYTTKYLQKHSALFDQLDLVTYEEVMRLSQYRRKTLVLLGAHGVGRRHIKNTLIHRHPNRFAYPIPHTTRPPRKDEVDGKHYYFVTNEQMMADIQNNEYLEYGTHEESMYGTKLETIRNIHKSGKIAILDVEPQALKVLRTAEYSPFVVFIAAPNLQGMQDPDGSLEKLLNESDVLRQAFGHLFDFIITNSDIDDTIAQLERLVEKLPAYPQWLPVTWVY.

One can recognise a Protein kinase domain in the interval 17–281 (LSIRDVIEQG…AKEALNHEWI (265 aa)). Residues 310–320 (KSNVLSAVNSG) are calmodulin-binding. Residues 318-366 (NSGRFDETTPRQDTPQTAFVDGSSPGGDCCHRGESSSNDAAEPPADKDL) are disordered. 2 consecutive L27 domains span residues 365–422 (DLSG…CEPV) and 428–479 (TSTL…RDPK). The PDZ domain occupies 545 to 620 (RLVQFQKDTQ…MLRDARGQVT (76 aa)). An SH3 domain is found at 633–717 (ACEIFVRAQF…PSPELQEWRT (85 aa)). Residues 774–946 (RKTLVLLGAH…TIAQLERLVE (173 aa)) form the Guanylate kinase-like domain.

It belongs to the MAGUK family.

May play a structural role in the induction of the vulva. May be required for the localization of signal transduction molecules (such as let-23 receptor) to either the basal membrane domain or the cell junctions. The chain is Protein lin-2 (lin-2) from Caenorhabditis elegans.